Reading from the N-terminus, the 512-residue chain is Zinc finger CCCH-type with G patch domain-containing protein (512 aa).

A C3H1-type zinc finger spans residues 159–186 (QEMVPCAYFLEGDCKFNDEMCRFSHGEL). The disordered stretch occupies residues 255 to 280 (LEGDDVPSSDSESNSDSDEENEDDVV). The segment covering 256-279 (EGDDVPSSDSESNSDSDEENEDDV) has biased composition (acidic residues). Residues 308–354 (TKGIGSKIMLKMGYVVGAGLGSKGEGIVVPVSAQVLPQGRSLDYCMQ) form the G-patch domain. The segment covering 407–417 (SSNGSSSSSGS) has biased composition (low complexity). The interval 407–432 (SSNGSSSSSGSKKPAAKDNQMDLPSC) is disordered.

The protein localises to the nucleus. Functionally, transcription repressor. This Aedes aegypti (Yellowfever mosquito) protein is Zinc finger CCCH-type with G patch domain-containing protein.